The chain runs to 477 residues: POC1 centriolar protein homolog B (477 aa).

WD repeat units follow at residues 16-55 (GHKA…RAYR), 58-97 (GHKD…KSSE), 100-139 (AHTA…FLYS), 142-181 (RHTH…CVNN), 183-223 (SDSV…LLQH), 226-265 (VHSC…LIYT), and 268-307 (GHTG…VHYR). Residues 449-469 (EQRLSLTEDKLKDCLENQQKL) are a coiled coil.

Belongs to the WD repeat POC1 family. Interacts with POC1A. Interacts with FAM161A. Interacts with CEP44; the interaction is direct and recruits POC1B to centriolar microtubules. Forms a microtubule-associated complex with POC5, CETN2 and FAM161A. Interacts with CCDC15. In terms of processing, phosphorylated in mitotic cells that may be mediated by CDK1.

It localises to the cytoplasm. The protein resides in the cytoskeleton. The protein localises to the microtubule organizing center. Its subcellular location is the centrosome. It is found in the centriole. It localises to the cilium basal body. The protein resides in the spindle pole. In terms of biological role, plays an important role in centriole assembly and/or stability and ciliogenesis. Involved in early steps of centriole duplication, as well as in the later steps of centriole length control. Acts in concert with POC1A to ensure centriole integrity and proper mitotic spindle formation. Required for primary cilia formation, ciliary length and also cell proliferation. Required for retinal integrity. Acts as a positive regulator of centriole elongation. The polypeptide is POC1 centriolar protein homolog B (Poc1b) (Rattus norvegicus (Rat)).